A 204-amino-acid chain; its full sequence is MSKIAVLNEKFEKTSEIELPASYAEVNSHNLYLYVKSYLAGIRANSAHTKGRSDVSGGGKKPWRQKGRGGARAGSTRTNVWVGGAVAFGPKNNRNYDQKVNKKQKRLALEFALNDKVANGKFFAVDSIEISSGKTKDAASIINKLGVRDALIIKNELDAKTLLAFRNLANCYVIDASEVNAYLVSVYSAVIAEKAALQSIVKEG.

Residues 48–75 (HTKGRSDVSGGGKKPWRQKGRGGARAGS) are disordered.

It belongs to the universal ribosomal protein uL4 family. In terms of assembly, part of the 50S ribosomal subunit.

In terms of biological role, one of the primary rRNA binding proteins, this protein initially binds near the 5'-end of the 23S rRNA. It is important during the early stages of 50S assembly. It makes multiple contacts with different domains of the 23S rRNA in the assembled 50S subunit and ribosome. Its function is as follows. Forms part of the polypeptide exit tunnel. The sequence is that of Large ribosomal subunit protein uL4 from Campylobacter fetus subsp. fetus (strain 82-40).